The chain runs to 529 residues: Neuronal acetylcholine receptor subunit alpha-2 (529 aa).

The N-terminal stretch at 1–26 (MGPSCPVFLSFTKLSLWWLLLTPAGG) is a signal peptide. The segment at 27-56 (EEAKRPPPRAPGDPLSSPSPTALPQGGSHT) is disordered. Over 27–264 (EEAKRPPPRA…VTYAFIIRRL (238 aa)) the chain is Extracellular. N-linked (GlcNAc...) asparagine glycans are attached at residues asparagine 79 and asparagine 129. Cysteine 183 and cysteine 197 form a disulfide bridge. Residue asparagine 235 is glycosylated (N-linked (GlcNAc...) asparagine). Cysteine 247 and cysteine 248 form a disulfide bridge. 3 helical membrane-spanning segments follow: residues 265–289 (PLFY…VFYL), 297–315 (ITLC…LLIT), and 331–352 (YLLF…VLNV). The Cytoplasmic segment spans residues 353–502 (HHRSPSTHTM…WKYVAMVIDR (150 aa)). A helical membrane pass occupies residues 503–521 (IFLWLFIIVCFLGTIGLFL).

The protein belongs to the ligand-gated ion channel (TC 1.A.9) family. Acetylcholine receptor (TC 1.A.9.1) subfamily. Alpha-2/CHRNA2 sub-subfamily. In terms of assembly, neuronal AChR is composed of two different types of subunits: alpha and non-alpha (beta). CHRNA2/alpha-2 subunit can be combined to CHRNB2/beta-2 or CHRNB4/beta-4 to give rise to functional receptors. Both CHRNA2:CHRNB2 and CHRNA2:CHRNB4 nAChR complexes are heteropentamers with two subtypes: LS (low agonist sensitivity) with a (CHRNA2)3:(CHRNB2/4)2 and HS (high agonist sensitivity) with a (CHRNA2)2:(CHRNB2/4)3 stoichiometries; the subtypes differ in their subunit binding interfaces which are involved in ligand binding.

The protein resides in the synaptic cell membrane. It is found in the cell membrane. It carries out the reaction Ca(2+)(in) = Ca(2+)(out). The enzyme catalyses K(+)(in) = K(+)(out). The catalysed reaction is Na(+)(in) = Na(+)(out). In terms of biological role, component of neuronal acetylcholine receptors (nAChRs) that function as pentameric, ligand-gated cation channels with high calcium permeability among other activities. nAChRs are excitatory neurotrasnmitter receptors formed by a collection of nAChR subunits known to mediate synaptic transmission in the nervous system and the neuromuscular junction. Each nAchR subunit confers differential attributes to channel properties, including activation, deactivation and desensitization kinetics, pH sensitivity, cation permeability, and binding to allosteric modulators. CHRNA2 forms heteropentameric neuronal acetylcholine receptors with CHRNB2 and CHRNB4 and plays a role in nicotine dependence. The chain is Neuronal acetylcholine receptor subunit alpha-2 (CHRNA2) from Pan troglodytes (Chimpanzee).